The sequence spans 124 residues: Ribonuclease pancreatic (124 aa).

A compositionally biased stretch (basic and acidic residues) spans 1 to 15 (KESPAKKFQRQHMDP). Positions 1-24 (KESPAKKFQRQHMDPDSSSSNSSN) are disordered. The substrate site is built by Lys7 and Arg10. His12 acts as the Proton acceptor in catalysis. Asn21 and Asn34 each carry an N-linked (GlcNAc...) asparagine glycan. 4 disulfide bridges follow: Cys26–Cys84, Cys40–Cys95, Cys58–Cys110, and Cys65–Cys72. Residues 41-45 (KPVNT) and Lys66 contribute to the substrate site. A glycan (N-linked (GlcNAc...) asparagine) is linked at Asn76. Residue Arg85 coordinates substrate. The active-site Proton donor is His119.

The protein belongs to the pancreatic ribonuclease family. In terms of assembly, monomer. Interacts with and forms tight 1:1 complexes with RNH1. Dimerization of two such complexes may occur. Interaction with RNH1 inhibits this protein. As to expression, pancreas.

It localises to the secreted. The catalysed reaction is an [RNA] containing cytidine + H2O = an [RNA]-3'-cytidine-3'-phosphate + a 5'-hydroxy-ribonucleotide-3'-[RNA].. It catalyses the reaction an [RNA] containing uridine + H2O = an [RNA]-3'-uridine-3'-phosphate + a 5'-hydroxy-ribonucleotide-3'-[RNA].. Its function is as follows. Endonuclease that catalyzes the cleavage of RNA on the 3' side of pyrimidine nucleotides. Acts on single-stranded and double-stranded RNA. This chain is Ribonuclease pancreatic (RNASE1), found in Sus scrofa (Pig).